A 400-amino-acid chain; its full sequence is Ribosomal RNA large subunit methyltransferase I (400 aa).

A PUA domain is found at 6 to 84 (FPRLVLAKGR…NEAIDSAFFE (79 aa)).

It belongs to the methyltransferase superfamily. RlmI family.

Its subcellular location is the cytoplasm. The enzyme catalyses cytidine(1962) in 23S rRNA + S-adenosyl-L-methionine = 5-methylcytidine(1962) in 23S rRNA + S-adenosyl-L-homocysteine + H(+). Functionally, specifically methylates the cytosine at position 1962 (m5C1962) of 23S rRNA. In Klebsiella pneumoniae (strain 342), this protein is Ribosomal RNA large subunit methyltransferase I.